Reading from the N-terminus, the 194-residue chain is Erythropoietin (194 aa).

The N-terminal stretch at 1–27 is a signal peptide; it reads MGARDCTPLLLLLLSFLLFPLGLPVLG. Cystine bridges form between cysteine 34–cysteine 189 and cysteine 56–cysteine 60. N-linked (GlcNAc...) asparagine glycosylation occurs at asparagine 51. Asparagine 65 and asparagine 110 each carry an N-linked (GlcNAc...) asparagine glycan.

Belongs to the EPO/TPO family. Produced by kidney or liver of adult mammals and by liver of fetal or neonatal mammals.

The protein resides in the secreted. Hormone involved in the regulation of erythrocyte proliferation and differentiation and the maintenance of a physiological level of circulating erythrocyte mass. Binds to EPOR leading to EPOR dimerization and JAK2 activation thereby activating specific downstream effectors, including STAT1 and STAT3. This chain is Erythropoietin (EPO), found in Ovis aries (Sheep).